A 198-amino-acid polypeptide reads, in one-letter code: NAD(P)H dehydrogenase (quinone) (198 aa).

The Flavodoxin-like domain occupies 4–189 (ILVLYYSMYG…SIARYQGEYV (186 aa)). Residues 10-15 (SMYGHI) and 78-80 (TRF) contribute to the FMN site. NAD(+) is bound at residue tyrosine 12. Tryptophan 98 is a binding site for substrate. FMN-binding positions include 113–118 (STGTGG) and histidine 133.

Belongs to the WrbA family. FMN serves as cofactor.

The enzyme catalyses a quinone + NADH + H(+) = a quinol + NAD(+). It carries out the reaction a quinone + NADPH + H(+) = a quinol + NADP(+). This is NAD(P)H dehydrogenase (quinone) from Salmonella agona (strain SL483).